The following is a 331-amino-acid chain: D-alanine--D-alanine ligase (331 aa).

Residues Lys122–Glu328 enclose the ATP-grasp domain. Residue Ala152–Glu207 coordinates ATP. Mg(2+) is bound by residues Asp282, Glu295, and Asn297.

Belongs to the D-alanine--D-alanine ligase family. It depends on Mg(2+) as a cofactor. Mn(2+) serves as cofactor.

Its subcellular location is the cytoplasm. It carries out the reaction 2 D-alanine + ATP = D-alanyl-D-alanine + ADP + phosphate + H(+). It functions in the pathway cell wall biogenesis; peptidoglycan biosynthesis. Its function is as follows. Cell wall formation. This chain is D-alanine--D-alanine ligase, found in Vibrio vulnificus (strain YJ016).